The following is a 226-amino-acid chain: MTSWPPRIVIRRSSGLRTMESALVRSGLGPVAGVDEAGRGACAGPLVVAACVLAPKPYPALARLDDSKKLTERTREELFPAITRLAVAWSVVSFPADEVDRMGVHVANIEGMRRAVAGLTTTPGYVLTDGFRVPGLPAPSLPVIGGDAAAACIAAASVLAKVSRDRVMVAMDETHPGYGFAIHKGYNTPAHLAALEVLGPCPEHRRSWSNVAALLHRVDNSSGSAR.

Residues 29–220 enclose the RNase H type-2 domain; sequence GPVAGVDEAG…VAALLHRVDN (192 aa). A divalent metal cation contacts are provided by Asp35, Glu36, and Asp129.

This sequence belongs to the RNase HII family. Mn(2+) serves as cofactor. The cofactor is Mg(2+).

It is found in the cytoplasm. The catalysed reaction is Endonucleolytic cleavage to 5'-phosphomonoester.. Functionally, endonuclease that specifically degrades the RNA of RNA-DNA hybrids. This chain is Ribonuclease HII, found in Rhodococcus opacus (strain B4).